Reading from the N-terminus, the 623-residue chain is Chaperone protein HtpG (623 aa).

Residues 1–336 (MVSKQQTMGF…ASDLPLNISR (336 aa)) are a; substrate-binding. The b stretch occupies residues 337–550 (EILQDNKQVE…EQDMGLEMQR (214 aa)). A c region spans residues 551-623 (ILQAAGQQVP…NRVNRLLVSS (73 aa)).

It belongs to the heat shock protein 90 family. As to quaternary structure, homodimer.

Its subcellular location is the cytoplasm. In terms of biological role, molecular chaperone. Has ATPase activity. This is Chaperone protein HtpG from Legionella pneumophila (strain Paris).